The sequence spans 137 residues: Large ribosomal subunit protein uL16 (137 aa).

Belongs to the universal ribosomal protein uL16 family. As to quaternary structure, part of the 50S ribosomal subunit.

Functionally, binds 23S rRNA and is also seen to make contacts with the A and possibly P site tRNAs. The protein is Large ribosomal subunit protein uL16 of Cereibacter sphaeroides (strain ATCC 17029 / ATH 2.4.9) (Rhodobacter sphaeroides).